The primary structure comprises 281 residues: Large ribosomal subunit protein uL2 (281 aa).

The tract at residues 220–281 (VRGSVMNPND…RRRDGKALSK (62 aa)) is disordered. The segment covering 258-271 (KTRKKNKQSNKMIM) has biased composition (basic residues). Over residues 272 to 281 (RRRDGKALSK) the composition is skewed to basic and acidic residues.

It belongs to the universal ribosomal protein uL2 family. Part of the 50S ribosomal subunit. Forms a bridge to the 30S subunit in the 70S ribosome.

Its function is as follows. One of the primary rRNA binding proteins. Required for association of the 30S and 50S subunits to form the 70S ribosome, for tRNA binding and peptide bond formation. It has been suggested to have peptidyltransferase activity; this is somewhat controversial. Makes several contacts with the 16S rRNA in the 70S ribosome. This chain is Large ribosomal subunit protein uL2, found in Lachnoclostridium phytofermentans (strain ATCC 700394 / DSM 18823 / ISDg) (Clostridium phytofermentans).